Reading from the N-terminus, the 250-residue chain is 2,3-bisphosphoglycerate-dependent phosphoglycerate mutase (250 aa).

Residues 8–15, 21–22, arginine 60, 87–90, lysine 98, 114–115, and 183–184 contribute to the substrate site; these read RHGESQWN, TG, ERHY, RR, and GN. The Tele-phosphohistidine intermediate role is filled by histidine 9. Catalysis depends on glutamate 87, which acts as the Proton donor/acceptor.

Belongs to the phosphoglycerate mutase family. BPG-dependent PGAM subfamily. As to quaternary structure, homodimer.

It carries out the reaction (2R)-2-phosphoglycerate = (2R)-3-phosphoglycerate. It functions in the pathway carbohydrate degradation; glycolysis; pyruvate from D-glyceraldehyde 3-phosphate: step 3/5. Its function is as follows. Catalyzes the interconversion of 2-phosphoglycerate and 3-phosphoglycerate. The polypeptide is 2,3-bisphosphoglycerate-dependent phosphoglycerate mutase (Bordetella parapertussis (strain 12822 / ATCC BAA-587 / NCTC 13253)).